Here is a 108-residue protein sequence, read N- to C-terminus: uncharacterized protein (108 aa).

Residues 48–73 (NSNIPSSSSSSPSFASFFSSTSTSAT) are compositionally biased toward low complexity. Positions 48–81 (NSNIPSSSSSSPSFASFFSSTSTSATLNGSSNNK) are disordered.

This is an uncharacterized protein from Dictyostelium discoideum (Social amoeba).